A 166-amino-acid chain; its full sequence is Ribosomal RNA large subunit methyltransferase H (166 aa).

Residues Leu-85, Gly-116, and 135–140 (ISKMTF) contribute to the S-adenosyl-L-methionine site.

It belongs to the RNA methyltransferase RlmH family. As to quaternary structure, homodimer.

Its subcellular location is the cytoplasm. It catalyses the reaction pseudouridine(1915) in 23S rRNA + S-adenosyl-L-methionine = N(3)-methylpseudouridine(1915) in 23S rRNA + S-adenosyl-L-homocysteine + H(+). Its function is as follows. Specifically methylates the pseudouridine at position 1915 (m3Psi1915) in 23S rRNA. This chain is Ribosomal RNA large subunit methyltransferase H, found in Francisella tularensis subsp. holarctica (strain FTNF002-00 / FTA).